The chain runs to 240 residues: Uridylate kinase (240 aa).

12–15 (KLSG) serves as a coordination point for ATP. Gly54 serves as a coordination point for UMP. ATP-binding residues include Gly55 and Arg59. UMP-binding positions include Asp74 and 135–142 (TGNPFFTT). Residues Thr162, Tyr168, and Asp171 each coordinate ATP.

The protein belongs to the UMP kinase family. As to quaternary structure, homohexamer.

It localises to the cytoplasm. It catalyses the reaction UMP + ATP = UDP + ADP. It functions in the pathway pyrimidine metabolism; CTP biosynthesis via de novo pathway; UDP from UMP (UMPK route): step 1/1. Its activity is regulated as follows. Inhibited by UTP. Its function is as follows. Catalyzes the reversible phosphorylation of UMP to UDP. The chain is Uridylate kinase from Xanthomonas oryzae pv. oryzae (strain KACC10331 / KXO85).